The sequence spans 411 residues: Gamma-glutamyl phosphate reductase (411 aa).

Belongs to the gamma-glutamyl phosphate reductase family.

The protein localises to the cytoplasm. The catalysed reaction is L-glutamate 5-semialdehyde + phosphate + NADP(+) = L-glutamyl 5-phosphate + NADPH + H(+). Its pathway is amino-acid biosynthesis; L-proline biosynthesis; L-glutamate 5-semialdehyde from L-glutamate: step 2/2. In terms of biological role, catalyzes the NADPH-dependent reduction of L-glutamate 5-phosphate into L-glutamate 5-semialdehyde and phosphate. The product spontaneously undergoes cyclization to form 1-pyrroline-5-carboxylate. The sequence is that of Gamma-glutamyl phosphate reductase from Wolinella succinogenes (strain ATCC 29543 / DSM 1740 / CCUG 13145 / JCM 31913 / LMG 7466 / NCTC 11488 / FDC 602W) (Vibrio succinogenes).